A 528-amino-acid chain; its full sequence is Peptide chain release factor 3 (528 aa).

A tr-type G domain is found at aspartate 10–histidine 278. GTP-binding positions include serine 19–threonine 26, aspartate 87–histidine 91, and asparagine 141–aspartate 144.

The protein belongs to the TRAFAC class translation factor GTPase superfamily. Classic translation factor GTPase family. PrfC subfamily.

It localises to the cytoplasm. Increases the formation of ribosomal termination complexes and stimulates activities of RF-1 and RF-2. It binds guanine nucleotides and has strong preference for UGA stop codons. It may interact directly with the ribosome. The stimulation of RF-1 and RF-2 is significantly reduced by GTP and GDP, but not by GMP. This chain is Peptide chain release factor 3, found in Syntrophobacter fumaroxidans (strain DSM 10017 / MPOB).